The sequence spans 455 residues: UDP-N-acetylmuramoyl-tripeptide--D-alanyl-D-alanine ligase (455 aa).

107-113 contributes to the ATP binding site; sequence GSCGKTS.

This sequence belongs to the MurCDEF family. MurF subfamily.

It is found in the cytoplasm. It catalyses the reaction D-alanyl-D-alanine + UDP-N-acetyl-alpha-D-muramoyl-L-alanyl-gamma-D-glutamyl-meso-2,6-diaminopimelate + ATP = UDP-N-acetyl-alpha-D-muramoyl-L-alanyl-gamma-D-glutamyl-meso-2,6-diaminopimeloyl-D-alanyl-D-alanine + ADP + phosphate + H(+). It participates in cell wall biogenesis; peptidoglycan biosynthesis. Its function is as follows. Involved in cell wall formation. Catalyzes the final step in the synthesis of UDP-N-acetylmuramoyl-pentapeptide, the precursor of murein. The sequence is that of UDP-N-acetylmuramoyl-tripeptide--D-alanyl-D-alanine ligase from Buchnera aphidicola subsp. Acyrthosiphon pisum (strain APS) (Acyrthosiphon pisum symbiotic bacterium).